The following is a 180-amino-acid chain: Regulator of G-protein signaling 8 (180 aa).

Phosphoserine is present on Ser-26. Residues 56 to 171 enclose the RGS domain; sequence SFDVLLSHKY…FLRSKMYLDL (116 aa).

In terms of assembly, interacts with GNAO1 and GNAI3.

It is found in the cell membrane. Its subcellular location is the membrane. The protein localises to the perikaryon. It localises to the cell projection. The protein resides in the dendrite. It is found in the nucleus. In terms of biological role, regulates G protein-coupled receptor signaling cascades, including signaling via muscarinic acetylcholine receptor CHRM2 and dopamine receptor DRD2. Inhibits signal transduction by increasing the GTPase activity of G protein alpha subunits, thereby driving them into their inactive GDP-bound form. Modulates the activity of potassium channels that are activated in response to DRD2 and CHRM2 signaling. The sequence is that of Regulator of G-protein signaling 8 (Rgs8) from Mus musculus (Mouse).